The chain runs to 345 residues: Ferredoxin--NADP reductase (345 aa).

FAD contacts are provided by aspartate 38, glutamine 46, tyrosine 51, valine 91, phenylalanine 129, aspartate 295, and threonine 336.

This sequence belongs to the ferredoxin--NADP reductase type 2 family. As to quaternary structure, homodimer. It depends on FAD as a cofactor.

It carries out the reaction 2 reduced [2Fe-2S]-[ferredoxin] + NADP(+) + H(+) = 2 oxidized [2Fe-2S]-[ferredoxin] + NADPH. The sequence is that of Ferredoxin--NADP reductase from Rhodospirillum rubrum (strain ATCC 11170 / ATH 1.1.1 / DSM 467 / LMG 4362 / NCIMB 8255 / S1).